A 93-amino-acid polypeptide reads, in one-letter code: Small ribosomal subunit protein bS18 (93 aa).

Residues Met1 to Gly11 show a composition bias toward basic residues. A disordered region spans residues Met1 to Lys27.

This sequence belongs to the bacterial ribosomal protein bS18 family. As to quaternary structure, part of the 30S ribosomal subunit. Forms a tight heterodimer with protein bS6.

In terms of biological role, binds as a heterodimer with protein bS6 to the central domain of the 16S rRNA, where it helps stabilize the platform of the 30S subunit. The chain is Small ribosomal subunit protein bS18 from Salinispora tropica (strain ATCC BAA-916 / DSM 44818 / JCM 13857 / NBRC 105044 / CNB-440).